Reading from the N-terminus, the 94-residue chain is MQDPNIETLFIIVHGKVQGVGYRHATVRRAHMLGVTGWVQNMENGTVQAMVQGSPDQVDHMLEWMRRGPPAASVTELESRREDGGRRFKHFAQH.

Residues Thr-8–His-94 enclose the Acylphosphatase-like domain. Catalysis depends on residues Arg-23 and Asn-41. The disordered stretch occupies residues Pro-69–His-94. Basic and acidic residues predominate over residues Leu-77 to Arg-86.

This sequence belongs to the acylphosphatase family.

It carries out the reaction an acyl phosphate + H2O = a carboxylate + phosphate + H(+). The chain is Acylphosphatase (acyP) from Bordetella avium (strain 197N).